A 278-amino-acid chain; its full sequence is 4-deoxy-L-threo-5-hexosulose-uronate ketol-isomerase (278 aa).

Zn(2+) is bound by residues His-196, His-198, Glu-203, and His-245.

Belongs to the KduI family. As to quaternary structure, homohexamer. The cofactor is Zn(2+).

It carries out the reaction 5-dehydro-4-deoxy-D-glucuronate = 3-deoxy-D-glycero-2,5-hexodiulosonate. The protein operates within glycan metabolism; pectin degradation; 2-dehydro-3-deoxy-D-gluconate from pectin: step 4/5. Functionally, catalyzes the isomerization of 5-dehydro-4-deoxy-D-glucuronate to 3-deoxy-D-glycero-2,5-hexodiulosonate. The sequence is that of 4-deoxy-L-threo-5-hexosulose-uronate ketol-isomerase from Escherichia coli (strain UTI89 / UPEC).